A 204-amino-acid chain; its full sequence is Lysozyme g (204 aa).

Residues 1-19 form the signal peptide; sequence MHLMLVLLGLAALLGTSQS. Cystine bridges form between cysteine 23–cysteine 79 and cysteine 37–cysteine 48. Active-site residues include glutamate 92 and aspartate 105.

The protein belongs to the glycosyl hydrolase 23 family.

It is found in the secreted. It carries out the reaction Hydrolysis of (1-&gt;4)-beta-linkages between N-acetylmuramic acid and N-acetyl-D-glucosamine residues in a peptidoglycan and between N-acetyl-D-glucosamine residues in chitodextrins.. Its function is as follows. Has bacteriolytic activity against M.luteus. This Struthio camelus (Common ostrich) protein is Lysozyme g.